The following is a 503-amino-acid chain: Na(+)-translocating NADH-quinone reductase subunit B (503 aa).

Transmembrane regions (helical) follow at residues 55-75, 94-114, 120-140, 161-181, and 186-206; these read MMLV…NSGV, ISGF…FSIL, IFLP…VLFA, TLPP…GVVV, and FGGT…FLFF. An FMN phosphoryl threonine modification is found at Thr-248. 5 helical membrane-spanning segments follow: residues 361–381, 387–407, 417–437, 452–472, and 475–495; these read TSTF…IASW, FGIG…LIVG, FFIP…LVFM, WIYG…NPAY, and GVML…YFAV.

It belongs to the NqrB/RnfD family. As to quaternary structure, composed of six subunits; NqrA, NqrB, NqrC, NqrD, NqrE and NqrF. FMN is required as a cofactor.

It is found in the cell inner membrane. It catalyses the reaction a ubiquinone + n Na(+)(in) + NADH + H(+) = a ubiquinol + n Na(+)(out) + NAD(+). Functionally, NQR complex catalyzes the reduction of ubiquinone-1 to ubiquinol by two successive reactions, coupled with the transport of Na(+) ions from the cytoplasm to the periplasm. NqrA to NqrE are probably involved in the second step, the conversion of ubisemiquinone to ubiquinol. This chain is Na(+)-translocating NADH-quinone reductase subunit B, found in Chlamydia caviae (strain ATCC VR-813 / DSM 19441 / 03DC25 / GPIC) (Chlamydophila caviae).